The primary structure comprises 64 residues: Large ribosomal subunit protein bL35 (64 aa).

The tract at residues 1–23 (MPKMKTKSGAAKRFKKTANGFKH) is disordered.

It belongs to the bacterial ribosomal protein bL35 family.

The polypeptide is Large ribosomal subunit protein bL35 (Stutzerimonas stutzeri (strain A1501) (Pseudomonas stutzeri)).